The primary structure comprises 130 residues: uncharacterized protein (130 aa).

The protein belongs to the thioester dehydratase family. FabZ subfamily.

This is an uncharacterized protein from Bacillus subtilis (strain 168).